Reading from the N-terminus, the 347-residue chain is 4-hydroxy-2-oxovalerate aldolase 2 (347 aa).

One can recognise a Pyruvate carboxyltransferase domain in the interval 7–259; the sequence is VRITDTSLRD…KTGIDFFDIA (253 aa). Substrate is bound at residue 15–16; that stretch reads RD. Aspartate 16 provides a ligand contact to Mn(2+). The Proton acceptor role is filled by histidine 19. Positions 169 and 198 each coordinate substrate. Residues histidine 198 and histidine 200 each coordinate Mn(2+). Residue tyrosine 289 coordinates substrate.

The protein belongs to the 4-hydroxy-2-oxovalerate aldolase family.

It catalyses the reaction (S)-4-hydroxy-2-oxopentanoate = acetaldehyde + pyruvate. This is 4-hydroxy-2-oxovalerate aldolase 2 from Mycobacterium marinum (strain ATCC BAA-535 / M).